Reading from the N-terminus, the 852-residue chain is Disrupted in schizophrenia 1 homolog (852 aa).

3 disordered regions span residues 1 to 86, 236 to 264, and 280 to 320; these read MQGG…GLDP, EAEP…PRHL, and QVTR…QGGG. Residues 1-294 are interaction with MAP1A; that stretch reads MQGGGPRGAP…SSRQSECGTV (294 aa). Residues 65–79 are compositionally biased toward polar residues; that stretch reads AGLTGQQSQHSQSKA. Over residues 253–263 the composition is skewed to basic and acidic residues; it reads SSDRPHGDPRH. Positions 288–311 are enriched in low complexity; sequence QSECGTVSSSSSDTGFSSQDASSA. Positions 295 to 693 are interaction with TRAF3IP1; that stretch reads SSSSSDTGFS…LGRVWKADLE (399 aa). Coiled-coil stretches lie at residues 367–397 and 449–496; these read EDGD…ALPS and ITRR…LLRW. The interval 437–594 is required for localization to punctate cytoplasmic foci; sequence LRTTAQDSLP…LLEAKMLALS (158 aa). Positions 443-852 are necessary and sufficient for interaction with PCNT and localization at the centrosome; it reads DSLPASITRR…PTAGAQETEA (410 aa). Residues 595 to 852 form an interaction with ATF4 and ATF5 region; it reads GSCFSTAKEL…PTAGAQETEA (258 aa). Disordered regions lie at residues 706 to 746 and 833 to 852; these read EAGS…KSPL and KEAG…ETEA. The segment at 728 to 852 is interaction with NDEL1 and PAFAH1B1; sequence TAALAVPRTP…PTAGAQETEA (125 aa). The segment at 728 to 852 is interaction with PAFAH1B1; the sequence is TAALAVPRTP…PTAGAQETEA (125 aa). Residues 802 to 835 are interaction with NDEL1; that stretch reads SHDEALFQSLQGELQTVKETLQAMILQLQPTKEA.

In terms of assembly, interacts with NDEL1. Interacts with CCDC88A (via C-terminus); the interaction is direct. Interacts with GSK3B. Interacts with tubulin alpha, ACTN2, ANKHD1, ATF4, ATF5, CEP63, EIF3S3, MAP1A, NDEL1, PAFAH1B1, RANBP9, SPTBN4, SYNE1 and TRAF3IP1. Interaction with microtubules may be mediated in part by TRAF3IP1. Interacts (via C-terminal) with PCNT. Interacts with CHCHD6. Interacts with CCDC141. Interacts with FBXW7, the substrate-recognition component of a SCF (SKP1-CUL1-F-box protein) E3 ubiquitin-protein ligase complex; the interaction targets DISC1 for proteasomal degradation. Interacts with ZNF365. Interacts with ATF4; inhibiting ATF4 transcription factor activity by disrupting ATF4 dimerization and DNA-binding. Interacts with PDE4B. Ubiquitinated. Ubiquitination with 'Lys-48'-linked polyubiquitin chains leads to its proteasomal degradation. In terms of tissue distribution, expressed in granule cell precursors within the dentate migratory stream during the first week of postnatal life and in differentiated granule cells of the hippocampus (at protein level). Detected in heart, brain, kidney, and testis. Expressed in dentate gyrus, hippocampus and in the olfactory bulb.

The protein resides in the cytoplasm. The protein localises to the cytoskeleton. It is found in the mitochondrion. It localises to the microtubule organizing center. Its subcellular location is the centrosome. The protein resides in the postsynaptic density. Its function is as follows. Involved in the regulation of multiple aspects of embryonic and adult neurogenesis. Required for neural progenitor proliferation in the ventrical/subventrical zone during embryonic brain development and in the adult dentate gyrus of the hippocampus. Participates in the Wnt-mediated neural progenitor proliferation as a positive regulator by modulating GSK3B activity and CTNNB1 abundance. Plays a role as a modulator of the AKT-mTOR signaling pathway controlling the tempo of the process of newborn neurons integration during adult neurogenesis, including neuron positioning, dendritic development and synapse formation. Inhibits the activation of AKT-mTOR signaling upon interaction with CCDC88A. Regulates the migration of early-born granule cell precursors toward the dentate gyrus during the hippocampal development. Inhibits ATF4 transcription factor activity in neurons by disrupting ATF4 dimerization and DNA-binding. Plays a role, together with PCNT, in the microtubule network formation. The protein is Disrupted in schizophrenia 1 homolog of Mus musculus (Mouse).